A 353-amino-acid polypeptide reads, in one-letter code: MGCGMSTEEKEGKQRNEEIENQLKRDKLMQRNEIKMLLLGAGESGKSTILKQMKLIHEGGYSRDERESFKEIIFSNTVQSMRVILEAMESLELPLDDQRAEYHVQTIFMQPAQIEGDSLPPEVGNAISVLWKDAGVQQCFQRSREYQLNDSAKYYFDSIDRIAAPDYIPNDQDVLRSRVKTTGITETTFIIGDLTYRMFDVGGQRSERKKWIHCFENVTTILFLVAISEYDQLLFEDETVNRMQEALTLFDSICNSRWFVKTSIILFLNKIDRFKEKLPVSPMKNYFPDYEGGPDYAAACDYILNRFVSLNQHETKQIYTHFTCATDTMQIRFVMAAVNDIIIQENLRLCGLI.

Residue Gly2 is the site of N-myristoyl glycine attachment. Cys3 carries S-palmitoyl cysteine lipidation. The 322-residue stretch at 32 to 353 (NEIKMLLLGA…QENLRLCGLI (322 aa)) folds into the G-alpha domain. The segment at 35-48 (KMLLLGAGESGKST) is G1 motif. GTP contacts are provided by Glu43, Ser44, Gly45, Lys46, Ser47, Thr48, Asp150, Leu175, Thr181, Gly203, Asn269, Lys270, Asp272, and Ala325. Mg(2+) is bound at residue Ser47. The tract at residues 173–181 (DVLRSRVKT) is G2 motif. Position 181 (Thr181) interacts with Mg(2+). The segment at 196 to 205 (YRMFDVGGQR) is G3 motif. Residues 265 to 272 (ILFLNKID) are G4 motif. Residues 323–328 (TCATDT) are G5 motif.

The protein belongs to the G-alpha family. G(q) subfamily. In terms of assembly, g proteins are composed of 3 units; alpha, beta and gamma. The alpha chain contains the guanine nucleotide binding site. Mg(2+) serves as cofactor.

In terms of biological role, guanine nucleotide-binding proteins (G proteins) are involved as modulators or transducers in various transmembrane signaling systems. Involved in the mating pathway. The chain is Guanine nucleotide-binding protein subunit alpha (CGA1) from Cochliobolus heterostrophus (strain C4 / ATCC 48331 / race T) (Southern corn leaf blight fungus).